The chain runs to 96 residues: Beta-defensin 20 (96 aa).

Residues 1–21 form the signal peptide; it reads MKLPQLLLILLFVVLADSVQP. Disulfide bonds link cysteine 24-cysteine 52, cysteine 32-cysteine 46, and cysteine 36-cysteine 53.

Belongs to the beta-defensin family.

It localises to the secreted. Has antibacterial activity. This is Beta-defensin 20 (Defb20) from Rattus norvegicus (Rat).